A 345-amino-acid polypeptide reads, in one-letter code: Molybdate/tungstate import ATP-binding protein WtpC (345 aa).

Residues 2–231 enclose the ABC transporter domain; that stretch reads LKVESISKDY…PKSEEVARFL (230 aa). Position 33 to 40 (33 to 40) interacts with ATP; sequence GPSGSGKT. The 66-residue stretch at 280–345 folds into the Mop domain; that stretch reads KTSARNVFKA…FKASAIHVFP (66 aa).

This sequence belongs to the ABC transporter superfamily. Sulfate/tungstate importer (TC 3.A.1.6) family. In terms of assembly, the complex is composed of two ATP-binding proteins (WtpC), two transmembrane proteins (WtpB) and a solute-binding protein (WtpA).

Its subcellular location is the cell membrane. It carries out the reaction tungstate(in) + ATP + H2O = tungstate(out) + ADP + phosphate + H(+). Part of the ABC transporter complex WtpABC involved in molybdate/tungstate import. Responsible for energy coupling to the transport system. The polypeptide is Molybdate/tungstate import ATP-binding protein WtpC (wtpC) (Pyrococcus horikoshii (strain ATCC 700860 / DSM 12428 / JCM 9974 / NBRC 100139 / OT-3)).